We begin with the raw amino-acid sequence, 334 residues long: Tryptophan--tRNA ligase (334 aa).

ATP is bound by residues 11 to 13 and 19 to 20; these read QPS and GN. A 'HIGH' region motif is present at residues 12 to 20; the sequence is PSGELTIGN. Asp-135 serves as a coordination point for L-tryptophan. ATP is bound by residues 147–149, Val-186, and 195–199; these read GED and KMSKS. A 'KMSKS' region motif is present at residues 195–199; the sequence is KMSKS.

The protein belongs to the class-I aminoacyl-tRNA synthetase family. In terms of assembly, homodimer.

It localises to the cytoplasm. It carries out the reaction tRNA(Trp) + L-tryptophan + ATP = L-tryptophyl-tRNA(Trp) + AMP + diphosphate + H(+). Catalyzes the attachment of tryptophan to tRNA(Trp). Amino acylates tRNA(Trp) with both L- and D-tryptophan, although D-tryptophan is a poor substrate. In Escherichia coli (strain K12), this protein is Tryptophan--tRNA ligase.